A 637-amino-acid chain; its full sequence is Probable ATP-binding protein YheS (637 aa).

ABC transporter domains are found at residues 2–246 (IVFS…AQQQ) and 313–527 (LKME…KQEN). ATP contacts are provided by residues 34–41 (GKNGCGKS) and 345–352 (GRNGAGKS). Residues 523–559 (QKQENQTDEAPKENANSAQARKDQKRREAELRAQTQP) form a disordered region. Basic and acidic residues predominate over residues 542-553 (ARKDQKRREAEL).

The protein belongs to the ABC transporter superfamily. ABCF family. YheS subfamily.

In terms of biological role, genetic data indicate it may be involved in ribosome assembly or function. This is Probable ATP-binding protein YheS (yheS) from Escherichia coli O157:H7.